Consider the following 207-residue polypeptide: Nitrophorin-1 (207 aa).

A signal peptide spans 1 to 23 (MKSYTALLAVAILCLFAAVGVSG). Disulfide bonds link Cys-25–Cys-145 and Cys-64–Cys-194. A heme-binding site is contributed by His-82.

The protein belongs to the calycin superfamily. Nitrophorin family. In terms of tissue distribution, salivary gland (at protein level).

Its subcellular location is the secreted. Heme-based protein that deliver nitric oxide gas (NO) to the victim while feeding, resulting in vasodilation and inhibition of platelet aggregation. Reversibly binds nitric oxide (NO). Also binds tightly to histamine, which is released by the host to induce wound healing. In Rhodnius prolixus (Triatomid bug), this protein is Nitrophorin-1.